Reading from the N-terminus, the 395-residue chain is Sensor protein DltS (395 aa).

2 helical membrane-spanning segments follow: residues 9-29 (FVFL…AVSN) and 136-156 (FLIL…SLYL). The 211-residue stretch at 177-387 (DASHELKTPI…RLEVQLPIDG (211 aa)) folds into the Histidine kinase domain. Histidine 180 is subject to Phosphohistidine; by autocatalysis.

It is found in the cell membrane. The catalysed reaction is ATP + protein L-histidine = ADP + protein N-phospho-L-histidine.. Functionally, member of the two-component regulatory system DltS/DltR. Regulates the expression of the dlt operon. Probably phosphorylates DltR. The chain is Sensor protein DltS (dltS) from Streptococcus agalactiae serotype V (strain ATCC BAA-611 / 2603 V/R).